The following is a 56-amino-acid chain: Large ribosomal subunit protein bL33 (56 aa).

The protein belongs to the bacterial ribosomal protein bL33 family.

This is Large ribosomal subunit protein bL33 from Treponema denticola (strain ATCC 35405 / DSM 14222 / CIP 103919 / JCM 8153 / KCTC 15104).